A 239-amino-acid polypeptide reads, in one-letter code: Small ribosomal subunit protein uS2 (239 aa).

This sequence belongs to the universal ribosomal protein uS2 family.

The protein is Small ribosomal subunit protein uS2 of Francisella tularensis subsp. holarctica (strain FTNF002-00 / FTA).